The chain runs to 1659 residues: Vitellogenin (1659 aa).

The signal sequence occupies residues 1–15 (MRAVVLALTLALVAS). The Vitellogenin domain maps to 24–662 (FAASKTYVYK…DAATLFPRTV (639 aa)). Asparagine 1089 carries N-linked (GlcNAc...) asparagine glycosylation. Low complexity-rich tracts occupy residues 1090-1111 (GTRA…SSSR) and 1119-1129 (SSSSSSSSSSR). The tract at residues 1090 to 1163 (GTRASSSSSS…SQSTSNVISR (74 aa)) is disordered. Residues 1389–1565 (VKCSMVRDTL…SWVLPSDSCR (177 aa)) form the VWFD domain. Intrachain disulfides connect cysteine 1391–cysteine 1528 and cysteine 1414–cysteine 1564. The N-linked (GlcNAc...) asparagine glycan is linked to asparagine 1627.

Post-translationally, phosvitin, an egg yolk storage protein, is one of the most highly phosphorylated (10%) proteins in nature. Produced by the liver, secreted into the blood and then sequestered by receptor mediated endocytosis into growing oocytes, where it is generally cleaved, giving rise to the respective yolk components lipovitellin-I, phosvitin, lipovitellin-II.

Its function is as follows. Precursor of the major egg-yolk proteins that are sources of nutrients during early development of oviparous organisms. This chain is Vitellogenin (vtg1), found in Oncorhynchus mykiss (Rainbow trout).